A 299-amino-acid polypeptide reads, in one-letter code: Nitrogenase iron protein (299 aa).

ATP is bound at residue 11–18 (GKGGIGKS). C99 contacts [4Fe-4S] cluster. Residue R102 is modified to ADP-ribosylarginine; by dinitrogenase reductase ADP-ribosyltransferase. C133 serves as a coordination point for [4Fe-4S] cluster.

It belongs to the NifH/BchL/ChlL family. Homodimer. Requires [4Fe-4S] cluster as cofactor. In terms of processing, the reversible ADP-ribosylation of Arg-102 inactivates the nitrogenase reductase and regulates nitrogenase activity.

The catalysed reaction is N2 + 8 reduced [2Fe-2S]-[ferredoxin] + 16 ATP + 16 H2O = H2 + 8 oxidized [2Fe-2S]-[ferredoxin] + 2 NH4(+) + 16 ADP + 16 phosphate + 6 H(+). Functionally, the key enzymatic reactions in nitrogen fixation are catalyzed by the nitrogenase complex, which has 2 components: the iron protein and the molybdenum-iron protein. This chain is Nitrogenase iron protein, found in Methylobacterium nodulans (strain LMG 21967 / CNCM I-2342 / ORS 2060).